The chain runs to 379 residues: Reducing end xylose-releasing exo-oligoxylanase (379 aa).

The Proton donor role is filled by glutamate 66. The Proton acceptor role is filled by aspartate 259.

Belongs to the glycosyl hydrolase 8 (cellulase D) family.

The catalysed reaction is Hydrolysis of (1-&gt;4)-beta-D-xylose residues from the reducing end of oligosaccharides.. Hydrolyzes xylooligosaccharides with a degree of polymerization of greater than or equal to 3, releasing xylose from the reducing end. Has low activity on birchwood xylan, oat spelt xylan and arabinoxylan. The sequence is that of Reducing end xylose-releasing exo-oligoxylanase from Bifidobacterium adolescentis (strain ATCC 15703 / DSM 20083 / NCTC 11814 / E194a).